The sequence spans 320 residues: Serpentine receptor class delta-28 (320 aa).

Helical transmembrane passes span Leu-5 to Ala-25, Ala-38 to Met-58, Ala-83 to Ile-103, Ser-122 to Ile-142, Leu-176 to Ile-196, Phe-230 to Ile-250, and Leu-258 to Val-278.

The protein belongs to the nematode receptor-like protein srd family.

It is found in the membrane. The polypeptide is Serpentine receptor class delta-28 (srd-28) (Caenorhabditis elegans).